The chain runs to 242 residues: Probable transcriptional regulatory protein NGK_1508 (242 aa).

This sequence belongs to the TACO1 family.

The protein localises to the cytoplasm. This chain is Probable transcriptional regulatory protein NGK_1508, found in Neisseria gonorrhoeae (strain NCCP11945).